Here is a 304-residue protein sequence, read N- to C-terminus: GTPase Era (304 aa).

The region spanning 11–179 (YCGFIAIVGR…QKIVRKSLRE (169 aa)) is the Era-type G domain. Positions 19 to 26 (GRPNVGKS) are G1. Residue 19–26 (GRPNVGKS) coordinates GTP. The G2 stretch occupies residues 45-49 (QTTRH). The segment at 66–69 (DTPG) is G3. GTP-binding positions include 66 to 70 (DTPGL) and 128 to 131 (NKVD). The tract at residues 128–131 (NKVD) is G4. A G5 region spans residues 158–160 (ISA). The 78-residue stretch at 210-287 (TGEELPYSVT…HLELWVKVKA (78 aa)) folds into the KH type-2 domain.

The protein belongs to the TRAFAC class TrmE-Era-EngA-EngB-Septin-like GTPase superfamily. Era GTPase family. Monomer.

The protein localises to the cytoplasm. It localises to the cell inner membrane. In terms of biological role, an essential GTPase that binds both GDP and GTP, with rapid nucleotide exchange. Plays a role in 16S rRNA processing and 30S ribosomal subunit biogenesis and possibly also in cell cycle regulation and energy metabolism. This Actinobacillus pleuropneumoniae serotype 3 (strain JL03) protein is GTPase Era.